The primary structure comprises 256 residues: uncharacterized protein (256 aa).

The first 23 residues, 1 to 23 (MKRLNKLVLGIIFLFLVISITAG), serve as a signal peptide directing secretion. Residue Cys24 is the site of N-palmitoyl cysteine attachment. Cys24 carries the S-diacylglycerol cysteine lipid modification.

This sequence belongs to the staphylococcal tandem lipoprotein family.

It is found in the cell membrane. This is an uncharacterized protein from Staphylococcus aureus (strain COL).